The following is a 598-amino-acid chain: Probable ATP-dependent RNA helicase DDX52 (598 aa).

Lys-15 is subject to N6-acetyllysine. Position 39 is a phosphoserine (Ser-39). Residues 166–194 (QLDQEYKINSRLLQNILDAGFQVPTPIQM) carry the Q motif motif. Residues 197-375 (IPVMLHGREL…KLNLDNVVSV (179 aa)) form the Helicase ATP-binding domain. 210–217 (APTGSGKT) serves as a coordination point for ATP. Positions 319 to 322 (DESD) match the DEAD box motif. Residues 386 to 547 (TVEQELLFVG…PVPEYIKGFQ (162 aa)) form the Helicase C-terminal domain.

Belongs to the DEAD box helicase family. DDX52/ROK1 subfamily.

The protein localises to the nucleus. It localises to the nucleolus. The enzyme catalyses ATP + H2O = ADP + phosphate + H(+). Its function is as follows. Required for efficient ribosome biogenesis. May control cell cycle progression by regulating translation of mRNAs that contain a terminal oligo pyrimidine (TOP) motif in their 5' UTRs, such as GTPBP4. The chain is Probable ATP-dependent RNA helicase DDX52 (Ddx52) from Mus musculus (Mouse).